We begin with the raw amino-acid sequence, 380 residues long: MNTIVIAPDSFKESMTALQAARAIEKGFRRVIPNANYRLIPMADGGEGTVQSIVDALQGERKVVKVEGPLGDTVEAEYGLSGDRKIAVIEMAQASGLHLVPKEKRNPLWTSTYGTGQLLIDALDEGVEQIILGIGGSATNDGGAGMAQAVGVRLLKENGEPIGKGGGKLKELARIDMSKVDPRIQQVKLQVACDVDNPLVGEKGAAVVYGPQKGATRATIRELDEQLLHFANIIEEELGKEVASIPGAGAAGGLGAGLIAFLDAKLIPGVELVLQATNFHELVKDADFVITGEGRIDQQTVYGKTPIGVAKAAKQYGVPVIAIAGSLGQGYEAVFEHGIDAAFSLVPRIMSLDEAMQQGDSLLEQAARNIAVVSSWNKST.

Belongs to the glycerate kinase type-1 family.

It carries out the reaction (R)-glycerate + ATP = (2R)-3-phosphoglycerate + ADP + H(+). This chain is Glycerate kinase (glxK), found in Halalkalibacterium halodurans (strain ATCC BAA-125 / DSM 18197 / FERM 7344 / JCM 9153 / C-125) (Bacillus halodurans).